Here is a 130-residue protein sequence, read N- to C-terminus: Early 3 receptor internalization and degradation beta protein (130 aa).

Residues 1-19 (MKRSVIFVLLIFCALPVLC) form the signal peptide. The chain crosses the membrane as a helical span at residues 53-77 (AWLYAIISVMVFCSTIFALAIYPYL). The tract at residues 122-125 (YFNL) is tyrosine-based sorting motif.

This sequence belongs to the adenoviridae E3_RID-beta family. As to quaternary structure, interacts with E3 RID-alpha and E3 CR1-alpha. In terms of processing, phosphorylated on serine. O-glycosylated, but not N-glycosylated.

The protein localises to the host membrane. Functionally, prevents infected cell apoptosis induced by the host immune system. Acts by down-regulating a number of cell surface receptors in the tumor necrosis factor (TNF) receptor superfamily, namely FAS, TNFRSF10A/TRAIL receptor 1, and TNFRSF10B/TRAIL receptor 2. Down-regulation of these death receptors protects adenovirus-infected cells from apoptosis induced by the death receptor ligands Fas ligand and TRAIL. RID complex also down-regulates certain tyrosine kinase cell surface receptors, especially the epidermal growth factor receptor (EGFR). RID-mediated Fas and EGFR down-regulation occurs via endocytosis of the receptors into endosomes followed by transport to and degradation within lysosomes. This is Early 3 receptor internalization and degradation beta protein from Human adenovirus C serotype 2 (HAdV-2).